A 1285-amino-acid polypeptide reads, in one-letter code: DNA polymerase II large subunit (1285 aa).

A disordered region spans residues 565-586 (TRIGGRMGRPGKSKPREMRPPP).

Belongs to the archaeal DNA polymerase II family. Heterodimer of a large subunit and a small subunit. This protein undergoes a protein self splicing that involves a post-translational excision of the intervening region (intein) followed by peptide ligation.

It carries out the reaction DNA(n) + a 2'-deoxyribonucleoside 5'-triphosphate = DNA(n+1) + diphosphate. The enzyme catalyses Exonucleolytic cleavage in the 3'- to 5'-direction to yield nucleoside 5'-phosphates.. In terms of biological role, possesses two activities: a DNA synthesis (polymerase) and an exonucleolytic activity that degrades single-stranded DNA in the 3'- to 5'-direction. Has a template-primer preference which is characteristic of a replicative DNA polymerase. In Methanoculleus marisnigri (strain ATCC 35101 / DSM 1498 / JR1), this protein is DNA polymerase II large subunit.